The following is a 384-amino-acid chain: Surfeit locus protein 1-like (384 aa).

The next 3 membrane-spanning stretches (helical) occupy residues 55–75 (ALLW…YKFL), 302–322 (IPLD…TCFI), and 338–358 (IGVE…TKIY).

Belongs to the SURF1 (TC 3.D.4.8) family.

The protein localises to the mitochondrion inner membrane. Functionally, may be involved in the biogenesis of the COX complex. This is Surfeit locus protein 1-like from Arabidopsis thaliana (Mouse-ear cress).